Reading from the N-terminus, the 614-residue chain is Probable peptide-binding protein YejA (614 aa).

Positions 1 to 27 (MILAPLKSRILIALAASALLIPAVASA) are cleaved as a signal peptide.

This sequence belongs to the bacterial solute-binding protein 5 family. As to quaternary structure, the complex is composed of one ATP-binding protein (YejF), two transmembrane proteins (YejB and YejE) and a solute-binding protein (YejA).

The protein resides in the periplasm. In terms of biological role, probably part of the ABC transporter complex YejABEF, which is likely involved in broad-spectrum peptide import. This chain is Probable peptide-binding protein YejA, found in Agrobacterium fabrum (strain C58 / ATCC 33970) (Agrobacterium tumefaciens (strain C58)).